Reading from the N-terminus, the 110-residue chain is Large ribosomal subunit protein uL22 (110 aa).

This sequence belongs to the universal ribosomal protein uL22 family. As to quaternary structure, part of the 50S ribosomal subunit.

This protein binds specifically to 23S rRNA; its binding is stimulated by other ribosomal proteins, e.g. L4, L17, and L20. It is important during the early stages of 50S assembly. It makes multiple contacts with different domains of the 23S rRNA in the assembled 50S subunit and ribosome. Its function is as follows. The globular domain of the protein is located near the polypeptide exit tunnel on the outside of the subunit, while an extended beta-hairpin is found that lines the wall of the exit tunnel in the center of the 70S ribosome. This chain is Large ribosomal subunit protein uL22, found in Hydrogenovibrio crunogenus (strain DSM 25203 / XCL-2) (Thiomicrospira crunogena).